The following is a 715-amino-acid chain: Polyribonucleotide nucleotidyltransferase (715 aa).

2 residues coordinate Mg(2+): Asp487 and Asp493. One can recognise a KH domain in the interval 554 to 613 (PRLYTFKINPEKIRDVIGKGGAVIRALTEETGTTIDIQDDGTITIAATSGEAAAAARSRI). Positions 623 to 691 (GKIYEGTVLK…DRGRVKLSMK (69 aa)) constitute an S1 motif domain.

The protein belongs to the polyribonucleotide nucleotidyltransferase family. The cofactor is Mg(2+).

It localises to the cytoplasm. The enzyme catalyses RNA(n+1) + phosphate = RNA(n) + a ribonucleoside 5'-diphosphate. Its function is as follows. Involved in mRNA degradation. Catalyzes the phosphorolysis of single-stranded polyribonucleotides processively in the 3'- to 5'-direction. This chain is Polyribonucleotide nucleotidyltransferase, found in Dechloromonas aromatica (strain RCB).